The primary structure comprises 159 residues: 2-C-methyl-D-erythritol 2,4-cyclodiphosphate synthase (159 aa).

A divalent metal cation is bound by residues D8 and H10. 4-CDP-2-C-methyl-D-erythritol 2-phosphate contacts are provided by residues D8–H10 and H34–S35. Position 42 (H42) interacts with a divalent metal cation. Residues D56 to G58, F61 to D65, A100 to L106, T132 to E135, F139, and R142 each bind 4-CDP-2-C-methyl-D-erythritol 2-phosphate.

The protein belongs to the IspF family. As to quaternary structure, homotrimer. A divalent metal cation serves as cofactor.

The catalysed reaction is 4-CDP-2-C-methyl-D-erythritol 2-phosphate = 2-C-methyl-D-erythritol 2,4-cyclic diphosphate + CMP. It functions in the pathway isoprenoid biosynthesis; isopentenyl diphosphate biosynthesis via DXP pathway; isopentenyl diphosphate from 1-deoxy-D-xylulose 5-phosphate: step 4/6. In terms of biological role, involved in the biosynthesis of isopentenyl diphosphate (IPP) and dimethylallyl diphosphate (DMAPP), two major building blocks of isoprenoid compounds. Catalyzes the conversion of 4-diphosphocytidyl-2-C-methyl-D-erythritol 2-phosphate (CDP-ME2P) to 2-C-methyl-D-erythritol 2,4-cyclodiphosphate (ME-CPP) with a corresponding release of cytidine 5-monophosphate (CMP). This chain is 2-C-methyl-D-erythritol 2,4-cyclodiphosphate synthase, found in Escherichia coli O139:H28 (strain E24377A / ETEC).